The chain runs to 175 residues: Large ribosomal subunit protein bL17m (175 aa).

The N-terminal 8 residues, 1–8 (MRLSVCAA), are a transit peptide targeting the mitochondrion. The disordered stretch occupies residues 155 to 175 (DLSQSQEASNHSSHTAQTPGI). The span at 157 to 175 (SQSQEASNHSSHTAQTPGI) shows a compositional bias: polar residues.

This sequence belongs to the bacterial ribosomal protein bL17 family. In terms of assembly, component of the mitochondrial ribosome large subunit (39S) which comprises a 16S rRNA and about 50 distinct proteins.

The protein resides in the mitochondrion. The sequence is that of Large ribosomal subunit protein bL17m (MRPL17) from Pongo abelii (Sumatran orangutan).